Reading from the N-terminus, the 479-residue chain is UDP-glucose flavonoid 3-O-glucosyltransferase 6 (479 aa).

The Proton acceptor role is filled by histidine 17. Histidine 17 serves as a coordination point for an anthocyanidin. Aspartate 121 (charge relay) is an active-site residue. Residues threonine 143, alanine 354, glutamine 356, histidine 371, tryptophan 374, asparagine 375, serine 376, and glutamate 379 each coordinate UDP-alpha-D-glucose. Position 394 (alanine 394) interacts with an anthocyanidin. Residues glutamate 395 and glutamine 396 each contribute to the UDP-alpha-D-glucose site. Residues methionine 454 to serine 479 form a disordered region.

Belongs to the UDP-glycosyltransferase family. Strongly expressed in achenes, with lower expression levels detected in receptacles.

It carries out the reaction a flavonol + UDP-alpha-D-glucose = a flavonol 3-O-beta-D-glucoside + UDP + H(+). Functionally, broad spectrum multifunctional glucosyltransferase. Catalyzes the formation of flavonol 3-O-glucosides during fruit ripening. Accepted substrates include several flavonoids, hydroxycoumarins and beta-naphthols. Uses UDP-Glc as a sugar donor, but not UDP-Gal or UDP-GlcUA. May also be involved in detoxification of xenobiotics. This is UDP-glucose flavonoid 3-O-glucosyltransferase 6 from Fragaria ananassa (Strawberry).